Here is a 312-residue protein sequence, read N- to C-terminus: L-lactate dehydrogenase (312 aa).

Residues V11, D32, R37, and 76 to 77 (GA) each bind NAD(+). Substrate contacts are provided by residues Q79, R85, and 117–120 (NPVD). Residues 115 to 117 (VSN) and T140 contribute to the NAD(+) site. 145 to 148 (DTAR) is a substrate binding site. R150 and H165 together coordinate beta-D-fructose 1,6-bisphosphate. Residue H172 is the Proton acceptor of the active site. Y217 is modified (phosphotyrosine). T226 is a substrate binding site.

The protein belongs to the LDH/MDH superfamily. LDH family. Homotetramer.

Its subcellular location is the cytoplasm. The catalysed reaction is (S)-lactate + NAD(+) = pyruvate + NADH + H(+). It participates in fermentation; pyruvate fermentation to lactate; (S)-lactate from pyruvate: step 1/1. Its activity is regulated as follows. Allosterically activated by fructose 1,6-bisphosphate (FBP). Functionally, catalyzes the conversion of lactate to pyruvate. The chain is L-lactate dehydrogenase from Pseudothermotoga lettingae (strain ATCC BAA-301 / DSM 14385 / NBRC 107922 / TMO) (Thermotoga lettingae).